The primary structure comprises 67 residues: Light-harvesting protein B-870 alpha chain (67 aa).

Over 1–12 (MWRIWRLFDPMR) the chain is Cytoplasmic. Residues 13–33 (AMVAQAVFLLGLAVLIHLMLL) form a helical membrane-spanning segment. H29 provides a ligand contact to a bacteriochlorophyll. Topologically, residues 34–67 (GTNKYNWLDGAKKAPVATAVAPVPAEVTSLAQAK) are periplasmic.

It belongs to the antenna complex alpha subunit family. An alpha/beta heterodimer. The core complex is formed by different alpha and beta chains, binding bacteriochlorophyll molecules, and arranged most probably in tetrameric structures disposed around the reaction center. The non-pigmented gamma chains may constitute additional components.

Its subcellular location is the cell inner membrane. Functionally, antenna complexes are light-harvesting systems, which transfer the excitation energy to the reaction centers. The polypeptide is Light-harvesting protein B-870 alpha chain (pufA) (Rubrivivax gelatinosus (strain NBRC 100245 / IL144)).